Here is a 263-residue protein sequence, read N- to C-terminus: Tryptophan synthase alpha chain (263 aa).

Residues E47 and D58 each act as proton acceptor in the active site.

It belongs to the TrpA family. As to quaternary structure, tetramer of two alpha and two beta chains.

The protein localises to the plastid. Its subcellular location is the chloroplast. It carries out the reaction (1S,2R)-1-C-(indol-3-yl)glycerol 3-phosphate + L-serine = D-glyceraldehyde 3-phosphate + L-tryptophan + H2O. The protein operates within amino-acid biosynthesis; L-tryptophan biosynthesis; L-tryptophan from chorismate: step 5/5. In terms of biological role, the alpha subunit is responsible for the aldol cleavage of indoleglycerol phosphate to indole and glyceraldehyde 3-phosphate. This Pyropia yezoensis (Susabi-nori) protein is Tryptophan synthase alpha chain.